Consider the following 366-residue polypeptide: RISC-loading complex subunit TARBP2 (366 aa).

Sufficient for interaction with PRKRA stretches follow at residues 22–105 (MLAA…EPAL), 152–234 (SPQQ…DARD), and 287–366 (LGAL…AGSK). The 68-residue stretch at 30 to 97 (TPISLLQEYG…AEVALKHLKG (68 aa)) folds into the DRBM 1 domain. Residues 135–158 (PSAVPTRSSPMEVQPPVSPQQSEC) form a disordered region. Position 152 is a phosphoserine (Ser-152). 2 DRBM domains span residues 159–227 (NPVG…RVHT) and 293–361 (ACCS…YLKI). A sufficient for interaction with DICER1 region spans residues 228-366 (VPLDARDGNE…QYLKIMAGSK (139 aa)).

This sequence belongs to the TARBP2 family. Self-associates. Component of the RISC loading complex (RLC), or micro-RNA (miRNA) loading complex (miRLC), which is composed of DICER1, AGO2 and TARBP2. Note that the trimeric RLC/miRLC is also referred to as RISC. Interacts with EIF2AK2/PKR and inhibits its protein kinase activity. Interacts with DHX9 and PRKRA. Interacts with DICER1, AGO2, MOV10, EIF6 and RPL7A (60S ribosome subunit); they form a large RNA-induced silencing complex (RISC). Interacts with IRF7; this interaction prevents IRF7 phosphorylation and activation.

It localises to the cytoplasm. Its subcellular location is the perinuclear region. The protein localises to the nucleus. Its function is as follows. Required for formation of the RNA induced silencing complex (RISC). Component of the RISC loading complex (RLC), also known as the micro-RNA (miRNA) loading complex (miRLC), which is composed of DICER1, AGO2 and TARBP2. Within the RLC/miRLC, DICER1 and TARBP2 are required to process precursor miRNAs (pre-miRNAs) to mature miRNAs and then load them onto AGO2. AGO2 bound to the mature miRNA constitutes the minimal RISC and may subsequently dissociate from DICER1 and TARBP2. May also play a role in the production of short interfering RNAs (siRNAs) from double-stranded RNA (dsRNA) by DICER1. Binds in vitro to the PRM1 3'-UTR. Seems to act as a repressor of translation. For some pre-miRNA substrates, may also alter the choice of cleavage site by DICER1. Negatively regulates IRF7-mediated IFN-beta signaling triggered by viral infection by inhibiting the phosphorylation of IRF7 and promoting its 'Lys'-48-linked ubiquitination and degradation. This chain is RISC-loading complex subunit TARBP2, found in Bos taurus (Bovine).